The primary structure comprises 285 residues: Phosphate import ATP-binding protein PstB (285 aa).

In terms of domain architecture, ABC transporter spans 22–262 (MRAVDLTLGF…PQHEETVRYF (241 aa)). 54-61 (GPTGSGKT) contacts ATP. Residues 266-285 (RPAQGSDRGSSQTAGVAESQ) are disordered. A compositionally biased stretch (polar residues) spans 272 to 285 (DRGSSQTAGVAESQ).

Belongs to the ABC transporter superfamily. Phosphate importer (TC 3.A.1.7) family. In terms of assembly, the complex is composed of two ATP-binding proteins (PstB), two transmembrane proteins (PstC and PstA) and a solute-binding protein (PstS).

It localises to the cell membrane. The enzyme catalyses phosphate(out) + ATP + H2O = ADP + 2 phosphate(in) + H(+). Functionally, part of the ABC transporter complex PstSACB involved in phosphate import. Responsible for energy coupling to the transport system. This Mycobacterium intracellulare protein is Phosphate import ATP-binding protein PstB.